The following is a 788-amino-acid chain: MDASLEKIADPTLAEMGKNLKEAVKMLEDSQRRTEEENGKKLISGDIPGPLQGSGQDMVSILQLVQNLMHGDEDEEPQSPRIQNIGEQGHMALLGHSLGAYISTLDKEKLRKLTTRILSDTTLWLCRIFRYENGCAYFHEEEREGLAKICRLAIHSRYEDFVVDGFNVLYNKKPVIYLSAAARPGLGQYLCNQLGLPFPCLCRVPCNTVFGSQHQMDVAFLEKLIKDDIERGRLPLLLVANAGTAAVGHTDKIGRLKELCEQYGIWLHVEGVNLATLALGYVSSSVLAAAKCDSMTMTPGPWLGLPAVPAVTLYKHDDPALTLVAGLTSNKPTDKLRALPLWLSLQYLGLDGFVERIKHACQLSQRLQESLKKVNYIKILVEDELSSPVVVFRFFQELPGSDPVFKAVPVPNMTPSGVGRERHSCDALNRWLGEQLKQLVPASGLTVMDLEAEGTCLRFSPLMTAAVLGTRGEDVDQLVACIESKLPVLCCTLQLREEFKQEVEATAGLLYVDDPNWSGIGVVRYEHANDDKSSLKSDPEGENIHAGLLKKLNELESDLTFKIGPEYKSMKSCLYVGMASDNVDAAELVETIAATAREIEENSRLLENMTEVVRKGIQEAQVELQKASEERLLEEGVLRQIPVVGSVLNWFSPVQALQKGRTFNLTAGSLESTEPIYVYKAQGAGVTLPPTPSGSRTKQRLPGQKPFKRSLRGSDALSETSSVSHIEDLEKVERLSSGPEQITLEASSTEGHPGAPSPQHTDQTEAFQKGVPHPEDDHSQVEGPESLR.

The segment covering 28 to 40 (EDSQRRTEEENGK) has biased composition (basic and acidic residues). The tract at residues 28–51 (EDSQRRTEEENGKKLISGDIPGPL) is disordered. Residue threonine 414 is modified to Phosphothreonine. Phosphoserine is present on serine 652. A disordered region spans residues 684-788 (AGVTLPPTPS…SQVEGPESLR (105 aa)). Residues threonine 687 and threonine 691 each carry the phosphothreonine modification. Residues serine 710, serine 718, and serine 722 each carry the phosphoserine modification. The span at 725-734 (HIEDLEKVER) shows a compositional bias: basic and acidic residues. Positions 738-750 (GPEQITLEASSTE) are enriched in polar residues. A phosphoserine mark is found at serine 748, serine 757, serine 779, and serine 786. A compositionally biased stretch (basic and acidic residues) spans 772-788 (PHPEDDHSQVEGPESLR).

It belongs to the group II decarboxylase family. Requires pyridoxal 5'-phosphate as cofactor.

The sequence is that of Pyridoxal-dependent decarboxylase domain-containing protein 1 (PDXDC1) from Homo sapiens (Human).